We begin with the raw amino-acid sequence, 490 residues long: uncharacterized protein (490 aa).

A helical membrane pass occupies residues 27 to 47; it reads VYVFLTTIILLLSLISTLIII.

It is found in the membrane. This is an uncharacterized protein from Borreliella burgdorferi (strain ATCC 35210 / DSM 4680 / CIP 102532 / B31) (Borrelia burgdorferi).